The following is a 342-amino-acid chain: Fatty acid desaturase 6 (342 aa).

2 consecutive transmembrane segments (helical) span residues 39–59 (GVDC…FLCL) and 63–83 (SPLV…TLTV). The Histidine box-1 motif lies at 87–91 (HLATH). The short motif at 124-128 (HVKMH) is the Histidine box-2 element. Transmembrane regions (helical) follow at residues 151 to 171 (YVYM…VAVE) and 185 to 205 (LGLI…VSGF). The Histidine box-3 motif lies at 277-281 (HVEHH).

Belongs to the fatty acid desaturase type 1 family.

The protein localises to the membrane. It participates in lipid metabolism; fatty acid metabolism. The chain is Fatty acid desaturase 6 (FADS6) from Bos taurus (Bovine).